The primary structure comprises 181 residues: Inner membrane-spanning protein YciB (181 aa).

The next 5 membrane-spanning stretches (helical) occupy residues 10 to 30 (LIIF…GALI), 50 to 70 (MHLI…VFHD), 72 to 92 (AFIK…LGVS), 118 to 138 (VTWY…YVAF), and 148 to 168 (FKVF…VFYL).

This sequence belongs to the YciB family.

It is found in the cell inner membrane. Its function is as follows. Plays a role in cell envelope biogenesis, maintenance of cell envelope integrity and membrane homeostasis. The protein is Inner membrane-spanning protein YciB of Shewanella sp. (strain ANA-3).